Reading from the N-terminus, the 410-residue chain is Phytoene synthase 1, chloroplastic (410 aa).

A chloroplast-targeting transit peptide spans 1–62 (MAIILVRAAS…EAGRPSPAVY (62 aa)).

This sequence belongs to the phytoene/squalene synthase family. Monomer. In terms of tissue distribution, expressed in embryos, endosperm and seedling leaves. Expressed in leaves and endosperm.

The protein resides in the plastid. Its subcellular location is the chloroplast stroma. It catalyses the reaction 2 (2E,6E,10E)-geranylgeranyl diphosphate = 15-cis-phytoene + 2 diphosphate. Its pathway is carotenoid biosynthesis; phytoene biosynthesis; all-trans-phytoene from geranylgeranyl diphosphate: step 1/1. In terms of biological role, catalyzes the conversion of geranylgeranyl diphosphate to phytoene. Mediates the first committed step in carotenoid biosynthesis. The sequence is that of Phytoene synthase 1, chloroplastic from Zea mays (Maize).